Consider the following 493-residue polypeptide: Glycerol kinase (493 aa).

Thr-11 is a binding site for ADP. Residues Thr-11, Thr-12, and Ser-13 each contribute to the ATP site. Thr-11 contacts sn-glycerol 3-phosphate. ADP is bound at residue Arg-15. 4 residues coordinate sn-glycerol 3-phosphate: Arg-80, Glu-81, Tyr-132, and Asp-241. Residues Arg-80, Glu-81, Tyr-132, Asp-241, and Gln-242 each coordinate glycerol. Positions 263 and 306 each coordinate ADP. Positions 263, 306, 310, and 408 each coordinate ATP. Gly-408 serves as a coordination point for ADP.

Belongs to the FGGY kinase family.

The catalysed reaction is glycerol + ATP = sn-glycerol 3-phosphate + ADP + H(+). Its pathway is polyol metabolism; glycerol degradation via glycerol kinase pathway; sn-glycerol 3-phosphate from glycerol: step 1/1. Inhibited by fructose 1,6-bisphosphate (FBP). In terms of biological role, key enzyme in the regulation of glycerol uptake and metabolism. Catalyzes the phosphorylation of glycerol to yield sn-glycerol 3-phosphate. This Cereibacter sphaeroides (strain ATCC 17023 / DSM 158 / JCM 6121 / CCUG 31486 / LMG 2827 / NBRC 12203 / NCIMB 8253 / ATH 2.4.1.) (Rhodobacter sphaeroides) protein is Glycerol kinase.